Here is a 384-residue protein sequence, read N- to C-terminus: Dual-specificity RNA methyltransferase RlmN (384 aa).

Glutamate 105 serves as the catalytic Proton acceptor. The Radical SAM core domain maps to 111–350; it reads EDDRATLCVS…TIVRKTRGDD (240 aa). An intrachain disulfide couples cysteine 118 to cysteine 355. Cysteine 125, cysteine 129, and cysteine 132 together coordinate [4Fe-4S] cluster. Residues 179 to 180, serine 211, 233 to 235, and asparagine 312 each bind S-adenosyl-L-methionine; these read GE and SLH. Catalysis depends on cysteine 355, which acts as the S-methylcysteine intermediate.

This sequence belongs to the radical SAM superfamily. RlmN family. It depends on [4Fe-4S] cluster as a cofactor.

The protein resides in the cytoplasm. The catalysed reaction is adenosine(2503) in 23S rRNA + 2 reduced [2Fe-2S]-[ferredoxin] + 2 S-adenosyl-L-methionine = 2-methyladenosine(2503) in 23S rRNA + 5'-deoxyadenosine + L-methionine + 2 oxidized [2Fe-2S]-[ferredoxin] + S-adenosyl-L-homocysteine. It catalyses the reaction adenosine(37) in tRNA + 2 reduced [2Fe-2S]-[ferredoxin] + 2 S-adenosyl-L-methionine = 2-methyladenosine(37) in tRNA + 5'-deoxyadenosine + L-methionine + 2 oxidized [2Fe-2S]-[ferredoxin] + S-adenosyl-L-homocysteine. Its function is as follows. Specifically methylates position 2 of adenine 2503 in 23S rRNA and position 2 of adenine 37 in tRNAs. m2A2503 modification seems to play a crucial role in the proofreading step occurring at the peptidyl transferase center and thus would serve to optimize ribosomal fidelity. This chain is Dual-specificity RNA methyltransferase RlmN, found in Escherichia coli O6:H1 (strain CFT073 / ATCC 700928 / UPEC).